Here is a 218-residue protein sequence, read N- to C-terminus: Small ribosomal subunit protein uS3c (218 aa).

In terms of domain architecture, KH type-2 spans 47-118 (VQKNMRTSSG…KLNIAVTRIA (72 aa)).

It belongs to the universal ribosomal protein uS3 family. In terms of assembly, part of the 30S ribosomal subunit.

The protein localises to the plastid. It is found in the chloroplast. In Solanum bulbocastanum (Wild potato), this protein is Small ribosomal subunit protein uS3c (rps3).